We begin with the raw amino-acid sequence, 339 residues long: MEPIHNPPPQTCSYSRPSTTYTSFKDASCGTKVTRIIIALFLIVISCGLILCAYTFRDLLDADYSAQEGPQQATKLLQQLDKVLTGPPLPIWDNEHLFQFSCLMQNKHRRVLPIDICNPLTKFNFLEYICNCLMTKQSVNVNETDMCELFCPPTCTPENYRRLLCTSSVFPFVMWHDPSADTQEAMLTKMDQTMSSGRVGNSHWVLVIVDIEHRCVTFFDSFYNYIASPQQMREQLEGLAASLGAIYPKEGGSDSDQEELLSPFQVRIGSTVKVQSPGEFTCGAWCCQFLAWYLENPDFDLEEKVPTNPSERRALLADFISTTEQAMSRYSSLSWPTTD.

The chain crosses the membrane as a helical span at residues 36–56; it reads IIIALFLIVISCGLILCAYTF. Active-site residues include H203, D220, and C282.

This sequence belongs to the peptidase C48 family.

It is found in the secreted. The protein resides in the host cell. The protein localises to the membrane. Effector proteins function to alter host cell physiology and promote bacterial survival in host tissues. This protease possesses deubiquitinating and deneddylating activities. The protein is Deubiquitinase and deneddylase Dub2 (cdu2) of Chlamydia trachomatis serovar B (strain Jali20/OT).